We begin with the raw amino-acid sequence, 195 residues long: Triosephosphate isomerase, cytosolic (195 aa).

The active-site Electrophile is His37. Glu107 (proton acceptor) is an active-site residue.

This sequence belongs to the triosephosphate isomerase family. Homodimer.

It is found in the cytoplasm. It catalyses the reaction D-glyceraldehyde 3-phosphate = dihydroxyacetone phosphate. It participates in carbohydrate biosynthesis; gluconeogenesis. The protein operates within carbohydrate degradation; glycolysis; D-glyceraldehyde 3-phosphate from glycerone phosphate: step 1/1. This chain is Triosephosphate isomerase, cytosolic, found in Lactuca sativa (Garden lettuce).